The primary structure comprises 464 residues: uncharacterized protein (464 aa).

Positions 1 to 24 (MSRFVPRIIPFYLLLLVAGGTANA) are cleaved as a signal peptide.

It belongs to the intimin/invasin family.

The protein resides in the periplasm. This is an uncharacterized protein from Escherichia coli (strain K12).